Reading from the N-terminus, the 152-residue chain is Ribonuclease H (152 aa).

The RNase H type-1 domain maps to 1–142; that stretch reads MNSKVVIYTD…ADKLAVQGRE (142 aa). 4 residues coordinate Mg(2+): D10, E48, D70, and D134.

Belongs to the RNase H family. Monomer. Mg(2+) serves as cofactor.

It is found in the cytoplasm. It catalyses the reaction Endonucleolytic cleavage to 5'-phosphomonoester.. In terms of biological role, endonuclease that specifically degrades the RNA of RNA-DNA hybrids. The sequence is that of Ribonuclease H from Rickettsia akari (strain Hartford).